Consider the following 589-residue polypeptide: Ubiquilin-1 (589 aa).

Positions 1-11 (MAESGESGGPP) are enriched in gly residues. 2 disordered regions span residues 1–35 (MAES…AEPK) and 110–145 (NRPQ…ATSN). A2 carries the post-translational modification N-acetylalanine. A compositionally biased stretch (low complexity) spans 12 to 35 (GSQDSAAGAEGAGAPAAAASAEPK). Residues 37-111 (MKVTVKTPKE…VHLVIKTQNR (75 aa)) form the Ubiquitin-like domain. Polar residues predominate over residues 110 to 124 (NRPQDHSAQQTNTAG). The segment covering 125 to 145 (SNVTTSSTPNSNSTSGSATSN) has biased composition (low complexity). The interval 178–428 (QLLSNPEMMV…LNNPLFAGNP (251 aa)) is interaction with UBXN4. STI1 domains lie at 182–210 (NPEM…QLIM) and 212–251 (NPQM…MQEM). The tract at residues 295–371 (PFASLVSNTS…NLVPGVGASM (77 aa)) is disordered. Residues 299–313 (LVSNTSSGEGSQPSR) show a composition bias toward polar residues. The segment covering 327-360 (QTSQSSSASSGTASTVGGTTGSTASGTSGQSTTA) has biased composition (low complexity). STI1 domains lie at 387-434 (NPQL…QEQM) and 438-470 (LPTF…QQGL). The interval 488-520 (LGALGSTGGSSGTNGSNATPSENTSPTAGTTEP) is disordered. Gly residues predominate over residues 489–499 (GALGSTGGSSG). Polar residues predominate over residues 509 to 520 (ENTSPTAGTTEP). The UBA domain maps to 546-586 (RFQQQLEQPSAMGFLNREANLQALIATGGDINAAIERLLGS).

As to quaternary structure, monomer and homodimer. Heterodimer with UBQLN2. Binds CD47, NBL1, GABRA1, GABRA2, GABRA3, GABRA6, GABRB1, GABRB2 and GABRB3. Binds UBE3A, BTRC, P4HB and MTOR. Interacts with the proteasome 19S subunit. Interacts (via ubiquitin-like domain) with TREX1; the interaction is direct and may control TREX1 subcellular location. Forms a complex with UBXN4 and VCP. Interacts (via UBA domain) with UBQLN4 (via ubiquitin-like domain). Found in a complex with UBQLN2 and MAP1LC3A/B/C. The monomeric form interacts with PSEN1 and PSEN2. Interacts with ORAI1. Interacts (via UBA domain) with TICAM1. Interacts with EPS15. Interacts (via UBA domain) with UBA52 and (via ubiquitin-like domain) with PSMD3 and PSMD4. Interacts with HERPUD1. Interacts with MAP1LC3A/B/C in the presence of UBQLN4. Interacts (via ubiquitin-like domain) with EPS15 (via UIM domains) and both the ubiquitinated and non-ubiquitinated forms can interact with EPS15. Interacts (via ubiquitin-like domain) with EPS15L1, HGS (via UIM domain) and STAM2 (via UIM domain). Interacts with BCL2L10/BCL-B; in the cytoplasm. Post-translationally, degraded during both macroautophagy and during chaperone-mediated autophagy (CMA). Phosphorylated. In terms of processing, ubiquitinated.

The protein resides in the nucleus. The protein localises to the cytoplasm. It is found in the endoplasmic reticulum. It localises to the cytoplasmic vesicle. Its subcellular location is the autophagosome. The protein resides in the cell membrane. Plays an important role in the regulation of different protein degradation mechanisms and pathways including ubiquitin-proteasome system (UPS), autophagy and endoplasmic reticulum-associated protein degradation (ERAD) pathway. Mediates the proteasomal targeting of misfolded or accumulated proteins for degradation by binding (via UBA domain) to their polyubiquitin chains and by interacting (via ubiquitin-like domain) with the subunits of the proteasome. Plays a role in the ERAD pathway via its interaction with ER-localized proteins UBXN4, VCP and HERPUD1 and may form a link between the polyubiquitinated ERAD substrates and the proteasome. Plays a role in unfolded protein response (UPR) by attenuating the induction of UPR-inducible genes, DDTI3/CHOP, HSPA5 and PDIA2 during ER stress. Involved in the regulation of macroautophagy and autophagosome formation; required for maturation of autophagy-related protein LC3 from the cytosolic form LC3-I to the membrane-bound form LC3-II and may assist in the maturation of autophagosomes to autolysosomes by mediating autophagosome-lysosome fusion. Negatively regulates the TICAM1/TRIF-dependent toll-like receptor signaling pathway by decreasing the abundance of TICAM1 via the autophagic pathway. Promotes the ubiquitination and lysosomal degradation of ORAI1, consequently down-regulating the ORAI1-mediated Ca2+ mobilization. Suppresses the maturation and proteasomal degradation of amyloid beta A4 protein (A4) by stimulating the lysine 63 (K63)-linked polyubiquitination. Delays the maturation of A4 by sequestering it in the Golgi apparatus and preventing its transport to the cell surface for subsequent processing. Ubiquitinates BCL2L10 and thereby stabilizes protein abundance. In Pongo abelii (Sumatran orangutan), this protein is Ubiquilin-1 (UBQLN1).